The primary structure comprises 316 residues: ATP synthase gamma chain (316 aa).

This sequence belongs to the ATPase gamma chain family. As to quaternary structure, F-type ATPases have 2 components, CF(1) - the catalytic core - and CF(0) - the membrane proton channel. CF(1) has five subunits: alpha(3), beta(3), gamma(1), delta(1), epsilon(1). CF(0) has three main subunits: a, b and c.

The protein resides in the cellular thylakoid membrane. In terms of biological role, produces ATP from ADP in the presence of a proton gradient across the membrane. The gamma chain is believed to be important in regulating ATPase activity and the flow of protons through the CF(0) complex. This chain is ATP synthase gamma chain, found in Prochlorococcus marinus (strain MIT 9215).